Here is a 498-residue protein sequence, read N- to C-terminus: MAQVINTNSLSLITQNNINKNQSALSSSIERLSSGLRINSAKDDAAGQAIANRFTSNIKGLTQAARNANDGISVAQTTEGALSEINNNLQRVRELTVQATTGTNSESDLSSIQDEIKSRLDEIDRVSGQTQFNGVNVLAKNGSMKIQVGANDNQTITIDLKQIDAKTLGLDGFSVKNNDTVTTSAPVTAFGATTTNNIKLTGITLSTEAATDTGGTNPASIEGVYTDNGNDYYAKITGGDNDGKYYAVTVANDGTVTMATGATANATVTDANTTKATTITSGGTPVQIDNTAGSATANLGAVSLVKLQDSKGNDTDTYALKDTNGNLYAADVNETTGAVSVKTITYTDSSGAASSPTAVKLGGDDGKTEVVDIDGKTYDSADLNGGNLQTGLTAGGEALTAVANGKTTDPLKALDDAIASVDKFRSSLGAVQNRLDSAVTNLNNTTTNLSEAQSRIQDADYATEVSNMSKAQIIQQAGNSVLAKANQVPQQVLSLLQG.

The protein belongs to the bacterial flagellin family.

It localises to the secreted. The protein localises to the bacterial flagellum. Flagellin is the subunit protein which polymerizes to form the filaments of bacterial flagella. The polypeptide is Flagellin (fliC) (Escherichia coli (strain K12)).